The primary structure comprises 369 residues: Developmentally-regulated G-protein 3 (369 aa).

Positions 66 to 291 (SRVGLVGFPS…LLDKIWEYLD (226 aa)) constitute an OBG-type G domain. Residues 72–79 (GFPSVGKS), 118–122 (DLPGI), and 249–252 (NKID) each bind GTP. The TGS domain maps to 291–367 (DLTRIYTKPK…EDEDVVQIVK (77 aa)).

This sequence belongs to the TRAFAC class OBG-HflX-like GTPase superfamily. OBG GTPase family.

Functionally, binds GDP and GTP, and has low GTPase activity in vitro. The polypeptide is Developmentally-regulated G-protein 3 (DRG3) (Arabidopsis thaliana (Mouse-ear cress)).